The sequence spans 227 residues: Agamous-like MADS-box protein AGL8 homolog (227 aa).

An MADS-box domain is found at 3-57 (RGRVQLKRIENKINRQVTFSKRRSGLLKKAHEISVLCDAEVGLIVFSTKGKLFEY). Residues 88-178 (PVSWTLEHRK…SKKVKEREKS (91 aa)) enclose the K-box domain.

Flower specific.

Its subcellular location is the nucleus. Probable transcription factor. The polypeptide is Agamous-like MADS-box protein AGL8 homolog (TDR4) (Solanum lycopersicum (Tomato)).